Reading from the N-terminus, the 103-residue chain is Large ribosomal subunit protein bL21 (103 aa).

This sequence belongs to the bacterial ribosomal protein bL21 family. Part of the 50S ribosomal subunit. Contacts protein L20.

Its function is as follows. This protein binds to 23S rRNA in the presence of protein L20. The polypeptide is Large ribosomal subunit protein bL21 (Amoebophilus asiaticus (strain 5a2)).